The primary structure comprises 155 residues: uncharacterized protein (155 aa).

Residues 1–14 (MLTLSGWITTQVPP) show a composition bias toward polar residues. Residues 1–44 (MLTLSGWITTQVPPSSRAAADAKAARTGTAEQAEDPAAGTDAAD) form a disordered region. The segment covering 17 to 30 (RAAADAKAARTGTA) has biased composition (low complexity).

This is an uncharacterized protein from Pseudomonas aeruginosa (strain ATCC 15692 / DSM 22644 / CIP 104116 / JCM 14847 / LMG 12228 / 1C / PRS 101 / PAO1).